The sequence spans 444 residues: Methylenetetrahydrofolate--tRNA-(uracil-5-)-methyltransferase TrmFO (444 aa).

FAD is bound at residue 10 to 15; it reads GAGLAG.

It belongs to the MnmG family. TrmFO subfamily. It depends on FAD as a cofactor.

The protein localises to the cytoplasm. It carries out the reaction uridine(54) in tRNA + (6R)-5,10-methylene-5,6,7,8-tetrahydrofolate + NADH + H(+) = 5-methyluridine(54) in tRNA + (6S)-5,6,7,8-tetrahydrofolate + NAD(+). The catalysed reaction is uridine(54) in tRNA + (6R)-5,10-methylene-5,6,7,8-tetrahydrofolate + NADPH + H(+) = 5-methyluridine(54) in tRNA + (6S)-5,6,7,8-tetrahydrofolate + NADP(+). Catalyzes the folate-dependent formation of 5-methyl-uridine at position 54 (M-5-U54) in all tRNAs. This chain is Methylenetetrahydrofolate--tRNA-(uracil-5-)-methyltransferase TrmFO, found in Streptococcus uberis (strain ATCC BAA-854 / 0140J).